Reading from the N-terminus, the 1841-residue chain is Sucrase-isomaltase, intestinal (1841 aa).

At 1-12 (MAKKKFSALEIS) the chain is on the cytoplasmic side. At serine 7 the chain carries Phosphoserine; by PKA. The helical; Signal-anchor for type II membrane protein transmembrane segment at 13–32 (LIVLFIIVTAIAIALVTVLA) threads the bilayer. Over 33–1841 (TKVPAVEEIK…LDEPIQITWS (1809 aa)) the chain is Lumenal. The disordered stretch occupies residues 42-81 (KSPTPTSNSTPTSTPTSTSTPTSTSTPSPGKCPPEQGEPI). A compositionally biased stretch (low complexity) spans 43–70 (SPTPTSNSTPTSTPTSTSTPTSTSTPSP). The P-type 1 domain maps to 71–120 (GKCPPEQGEPINERINCIPEQHPTKAICEERGCCWRPWNNTVIPWCFFAD). Disulfide bonds link cysteine 73-cysteine 104, cysteine 87-cysteine 103, and cysteine 98-cysteine 116. N-linked (GlcNAc...) asparagine glycosylation occurs at asparagine 109. Positions 120–1013 (DNHGYNAESI…ELQLNPPNAR (894 aa)) are isomaltase. Substrate is bound by residues aspartate 274 and aspartate 398. Sulfotyrosine is present on residues tyrosine 401 and tyrosine 410. Asparagine 464 is a glycosylation site (N-linked (GlcNAc...) asparagine). The active-site Nucleophile; for isomaltase activity is aspartate 514. A substrate-binding site is contributed by arginine 599. Catalysis depends on aspartate 615, which acts as the For isomaltase activity. An intrachain disulfide couples cysteine 646 to cysteine 657. Histidine 673 lines the substrate pocket. N-linked (GlcNAc...) asparagine glycosylation is found at asparagine 758, asparagine 765, asparagine 867, and asparagine 910. In terms of domain architecture, P-type 2 spans 936-984 (RWCRTFSDNEKFTCYPDVGTATEGTCTQRGCLWQPVSGLSNVPPYYFPP). The interval 1014–1841 (IKLPSNPIST…LDEPIQITWS (828 aa)) is sucrase. N-linked (GlcNAc...) asparagine glycosylation is found at asparagine 1240, asparagine 1308, asparagine 1345, asparagine 1359, and asparagine 1373. Position 1387 is a sulfotyrosine (tyrosine 1387). The active-site Nucleophile; for sucrase activity is the aspartate 1399. Glutamate 1402 acts as the For sucrase activity in catalysis. Asparagine 1485 is a glycosylation site (N-linked (GlcNAc...) asparagine). Residue aspartate 1512 is the Proton donor; for sucrase activity of the active site. N-linked (GlcNAc...) asparagine glycans are attached at residues asparagine 1513, asparagine 1575, asparagine 1762, and asparagine 1829.

It belongs to the glycosyl hydrolase 31 family. The resulting sucrase and isomaltase subunits stay associated with one another in a complex by non-covalent linkages. Post-translationally, the precursor is proteolytically cleaved when exposed to pancreatic proteases in the intestinal lumen. Sulfated.

The protein localises to the apical cell membrane. It carries out the reaction Hydrolysis of sucrose and maltose by an alpha-D-glucosidase-type action.. The enzyme catalyses Hydrolysis of (1-&gt;6)-alpha-D-glucosidic linkages in some oligosaccharides produced from starch and glycogen by alpha-amylase, and in isomaltose.. Functionally, plays an important role in the final stage of carbohydrate digestion. Isomaltase activity is specific for both alpha-1,4- and alpha-1,6-oligosaccharides. The protein is Sucrase-isomaltase, intestinal (Si) of Rattus norvegicus (Rat).